A 580-amino-acid chain; its full sequence is Amino-acid acetyltransferase, mitochondrial (580 aa).

The 158-residue stretch at 403–560 (LTMQNLFDDK…KLRHQNGVVD (158 aa)) folds into the N-acetyltransferase domain.

It belongs to the acetyltransferase family.

The protein resides in the mitochondrion. It carries out the reaction L-glutamate + acetyl-CoA = N-acetyl-L-glutamate + CoA + H(+). Its pathway is amino-acid biosynthesis; L-arginine biosynthesis; N(2)-acetyl-L-ornithine from L-glutamate: step 1/4. N-acetylglutamate synthase involved in arginine biosynthesis. In Candida albicans (strain SC5314 / ATCC MYA-2876) (Yeast), this protein is Amino-acid acetyltransferase, mitochondrial (ARG2).